A 196-amino-acid polypeptide reads, in one-letter code: Holliday junction branch migration complex subunit RuvA (196 aa).

The interval M1–A63 is domain I. Residues T64–A142 are domain II. Residues P143 to T146 form a flexible linker region. The interval A147–K196 is domain III.

Belongs to the RuvA family. Homotetramer. Forms an RuvA(8)-RuvB(12)-Holliday junction (HJ) complex. HJ DNA is sandwiched between 2 RuvA tetramers; dsDNA enters through RuvA and exits via RuvB. An RuvB hexamer assembles on each DNA strand where it exits the tetramer. Each RuvB hexamer is contacted by two RuvA subunits (via domain III) on 2 adjacent RuvB subunits; this complex drives branch migration. In the full resolvosome a probable DNA-RuvA(4)-RuvB(12)-RuvC(2) complex forms which resolves the HJ.

It localises to the cytoplasm. Its function is as follows. The RuvA-RuvB-RuvC complex processes Holliday junction (HJ) DNA during genetic recombination and DNA repair, while the RuvA-RuvB complex plays an important role in the rescue of blocked DNA replication forks via replication fork reversal (RFR). RuvA specifically binds to HJ cruciform DNA, conferring on it an open structure. The RuvB hexamer acts as an ATP-dependent pump, pulling dsDNA into and through the RuvAB complex. HJ branch migration allows RuvC to scan DNA until it finds its consensus sequence, where it cleaves and resolves the cruciform DNA. This is Holliday junction branch migration complex subunit RuvA from Streptococcus sanguinis (strain SK36).